Consider the following 428-residue polypeptide: Cell number regulator 13 (428 aa).

Residues 233-280 show a composition bias toward basic and acidic residues; it reads PEKETNVKAPEKKGSNYSESKGETAKSFDDDDDYPKKQNGDYPKKQKD. The disordered stretch occupies residues 233–290; sequence PEKETNVKAPEKKGSNYSESKGETAKSFDDDDDYPKKQNGDYPKKQKDTCSTQRCSSQ. The segment covering 281–290 has biased composition (polar residues); sequence TCSTQRCSSQ. A helical membrane pass occupies residues 354 to 370; sequence IMAYSLILSCCCYTCCV.

Expressed in roots, coleoptiles, leaves, stalks, apical meristems, immature ears, embryos, endosperm, pericarp, silks and tassel spikelets. Not detected in pollen.

The protein resides in the membrane. The protein is Cell number regulator 13 (CNR13) of Zea mays (Maize).